The following is a 1001-amino-acid chain: Serine/threonine-protein kinase TAO1 (1001 aa).

At Ser-9 the chain carries Phosphoserine. A Protein kinase domain is found at 28–281; that stretch reads FTDLREIGHG…SEELLKHMFV (254 aa). ATP is bound by residues 34-42 and Lys-57; that span reads IGHGSFGAV. Catalysis depends on Asp-151, which acts as the Proton acceptor. 2 disordered regions span residues 324–380 and 404–433; these read PAVE…DKSE and ENYQ…SHYR. The segment covering 350–370 has biased composition (low complexity); that stretch reads SNQSIPSMSISASSQSSSVNS. A phosphoserine mark is found at Ser-421 and Ser-445. The stretch at 458-651 forms a coiled coil; that stretch reads SELREQMSGY…QTQKDLEHAM (194 aa). The disordered stretch occupies residues 567–587; it reads KEELNENQSTPKKEKQEWLSK. Basic and acidic residues predominate over residues 577–587; it reads PKKEKQEWLSK. The residue at position 669 (Thr-669) is a Phosphothreonine. Residues 754-877 are a coiled coil; sequence KAVLKRLKEE…LERQAREIEA (124 aa). The disordered stretch occupies residues 905 to 1001; sequence PGASSWSHNP…ISNGSHMSYT (97 aa). Low complexity predominate over residues 921-930; the sequence is HWGHPMGGTP. Position 965 is a phosphoserine (Ser-965). The span at 975-1001 shows a compositional bias: polar residues; that stretch reads GGRTEQGMSRSTSVTSQISNGSHMSYT.

It belongs to the protein kinase superfamily. STE Ser/Thr protein kinase family. STE20 subfamily. As to quaternary structure, self-associates. Interacts with MAP2K3. Interacts with SPRED1. Interacts with TESK1; the interaction inhibits TAOK1 kinase activity. Interacts with MAP3K7. Proteolytically processed by caspase-3 (CASP3). Post-translationally, autophosphorylated. Phosphorylated by ATM in response to DNA damage. Phosphorylated by LRRK2.

The protein localises to the cytoplasm. It carries out the reaction L-seryl-[protein] + ATP = O-phospho-L-seryl-[protein] + ADP + H(+). The catalysed reaction is L-threonyl-[protein] + ATP = O-phospho-L-threonyl-[protein] + ADP + H(+). Serine/threonine-protein kinase activity is inhibited by SPRED1. Its function is as follows. Serine/threonine-protein kinase involved in various processes such as p38/MAPK14 stress-activated MAPK cascade, DNA damage response and regulation of cytoskeleton stability. Phosphorylates MAP2K3, MAP2K6 and MARK2. Acts as an activator of the p38/MAPK14 stress-activated MAPK cascade by mediating phosphorylation and subsequent activation of the upstream MAP2K3 and MAP2K6 kinases. Involved in G-protein coupled receptor signaling to p38/MAPK14. In response to DNA damage, involved in the G2/M transition DNA damage checkpoint by activating the p38/MAPK14 stress-activated MAPK cascade, probably by mediating phosphorylation of MAP2K3 and MAP2K6. Acts as a regulator of cytoskeleton stability by phosphorylating 'Thr-208' of MARK2, leading to activate MARK2 kinase activity and subsequent phosphorylation and detachment of MAPT/TAU from microtubules. Also acts as a regulator of apoptosis: regulates apoptotic morphological changes, including cell contraction, membrane blebbing and apoptotic bodies formation via activation of the MAPK8/JNK cascade. During fetal development, it plays an essential role in the regulation of neuronal differentiation and migration to the cortical plate. This Mus musculus (Mouse) protein is Serine/threonine-protein kinase TAO1 (Taok1).